We begin with the raw amino-acid sequence, 116 residues long: uncharacterized protein (116 aa).

The interval 76–116 (VPPPRYSYIRSESSRNNLRNSARNQPQNLVSEQDSDSNREN) is disordered. Low complexity predominate over residues 85–99 (RSESSRNNLRNSARN).

This is an uncharacterized protein from Glycine max (Soybean).